The primary structure comprises 107 residues: uncharacterized protein (107 aa).

2 helical membrane passes run Trp-5 to Val-25 and Ile-42 to Phe-62. Over residues Ile-82–Asp-92 the composition is skewed to basic and acidic residues. The tract at residues Ile-82–Asp-107 is disordered.

The protein localises to the cell membrane. This is an uncharacterized protein from Bacillus subtilis (strain 168).